The sequence spans 252 residues: Small ribosomal subunit protein eS4 (252 aa).

In terms of domain architecture, S4 RNA-binding spans 43–105; sequence FPLLIIVRDI…TGETYRVIPV (63 aa).

This sequence belongs to the eukaryotic ribosomal protein eS4 family.

This Staphylothermus marinus (strain ATCC 43588 / DSM 3639 / JCM 9404 / F1) protein is Small ribosomal subunit protein eS4.